Here is a 315-residue protein sequence, read N- to C-terminus: p-hydroxyphenylacetate 3-hydroxylase, reductase component (315 aa).

It belongs to the non-flavoprotein flavin reductase family. In terms of assembly, homodimer. The p-hydroxyphenylacetate 3-hydroxylase (HpaH) is composed of an oxygenase component C2 and a reductase component C1.

It carries out the reaction a reduced flavin + NAD(+) = an oxidized flavin + NADH + 2 H(+). It functions in the pathway aromatic compound metabolism; 4-hydroxyphenylacetate degradation; pyruvate and succinate semialdehyde from 4-hydroxyphenylacetate: step 1/7. With respect to regulation, flavin concentrations greater than 15 uM do not inhibit the NADH oxidation activity of the reductase component C1 but do affect the hydroxylation activity of the C1-C2 complex. Maximal reductase activity is achieved only upon HPA binding to the reductase component C1 before interaction with NADH. HPA stimulates the rates of both the reduction of FMN and release of reduced FMN from the reductase component. Reductase component of a two-component system that supplies reduced FMN (FMNH2) to the oxygenase component to catalyze the hydroxylation of 4-hydroxyphenylacetic acid, leading to the production of 3,4-dihydroxyphenylacetate (3,4-DHPA). Catalyzes the reduction of free flavins (FMN, FAD and riboflavin) by NADH. Subsequently, the reduced flavins diffuse to the oxygenase component C2. This chain is p-hydroxyphenylacetate 3-hydroxylase, reductase component, found in Acinetobacter baumannii.